Reading from the N-terminus, the 210-residue chain is ATP phosphoribosyltransferase (210 aa).

Belongs to the ATP phosphoribosyltransferase family. Short subfamily. Heteromultimer composed of HisG and HisZ subunits.

Its subcellular location is the cytoplasm. The catalysed reaction is 1-(5-phospho-beta-D-ribosyl)-ATP + diphosphate = 5-phospho-alpha-D-ribose 1-diphosphate + ATP. Its pathway is amino-acid biosynthesis; L-histidine biosynthesis; L-histidine from 5-phospho-alpha-D-ribose 1-diphosphate: step 1/9. Functionally, catalyzes the condensation of ATP and 5-phosphoribose 1-diphosphate to form N'-(5'-phosphoribosyl)-ATP (PR-ATP). Has a crucial role in the pathway because the rate of histidine biosynthesis seems to be controlled primarily by regulation of HisG enzymatic activity. In Caldanaerobacter subterraneus subsp. tengcongensis (strain DSM 15242 / JCM 11007 / NBRC 100824 / MB4) (Thermoanaerobacter tengcongensis), this protein is ATP phosphoribosyltransferase.